The following is a 440-amino-acid chain: Alpha-ionylideneethane synthase aba3 (440 aa).

Belongs to the alpha-ionylideneethane synthase family.

It participates in hormone biosynthesis. Its function is as follows. Alpha-ionylideneethane synthase; part of the gene cluster that mediates the biosynthesis of abscisic acid (ABA), a phytohormone that acts antagonistically toward salicylic acid (SA), jasmonic acid (JA) and ethylene (ETH) signaling, to impede plant defense responses. The first step of the pathway catalyzes the reaction from farnesyl diphosphate to alpha-ionylideneethane performed by the alpha-ionylideneethane synthase aba3 via a three-step reaction mechanism involving 2 neutral intermediates, beta-farnesene and allofarnesene. The cytochrome P450 monooxygenase aba1 might then be involved in the conversion of alpha-ionylideneethane to alpha-ionylideneacetic acid. Alpha-ionylideneacetic acid is further converted to abscisic acid in 2 steps involving the cytochrome P450 monooxygenase aba2 and the short-chain dehydrogenase/reductase aba4, via the intermediates 1'-deoxy-ABA or 1',4'-trans-diol-ABA, depending on the order of action of these 2 enzymes. Aba2 is responsible for the hydroxylation of carbon atom C-1' and aba4 might be involved in the oxidation of the C-4' carbon atom. This is Alpha-ionylideneethane synthase aba3 from Botryotinia fuckeliana (strain B05.10) (Noble rot fungus).